A 213-amino-acid chain; its full sequence is Thiopurine S-methyltransferase (213 aa).

Positions 10, 45, 66, and 121 each coordinate S-adenosyl-L-methionine.

Belongs to the class I-like SAM-binding methyltransferase superfamily. TPMT family.

The protein resides in the cytoplasm. It catalyses the reaction S-adenosyl-L-methionine + a thiopurine = S-adenosyl-L-homocysteine + a thiopurine S-methylether.. In Aliivibrio salmonicida (strain LFI1238) (Vibrio salmonicida (strain LFI1238)), this protein is Thiopurine S-methyltransferase.